The chain runs to 160 residues: Cytochrome b6-f complex subunit 4 (160 aa).

3 helical membrane-spanning segments follow: residues 36 to 56 (LLYI…GLAV), 95 to 115 (LLGV…PFIE), and 131 to 151 (ILFL…TFPI).

It belongs to the cytochrome b family. PetD subfamily. The 4 large subunits of the cytochrome b6-f complex are cytochrome b6, subunit IV (17 kDa polypeptide, petD), cytochrome f and the Rieske protein, while the 4 small subunits are petG, petL, petM and petN. The complex functions as a dimer.

Its subcellular location is the plastid. The protein localises to the chloroplast thylakoid membrane. In terms of biological role, component of the cytochrome b6-f complex, which mediates electron transfer between photosystem II (PSII) and photosystem I (PSI), cyclic electron flow around PSI, and state transitions. The sequence is that of Cytochrome b6-f complex subunit 4 from Chlamydomonas moewusii (Chlamydomonas eugametos).